Consider the following 518-residue polypeptide: Subtilisin-like protease 1 (518 aa).

The N-terminal stretch at 1-19 is a signal peptide; the sequence is MGVFRFISISLAAVSAANA. The propeptide occupies 20-116; the sequence is AQILSMPHAQ…VEPDTIISVH (97 aa). The region spanning 34-115 is the Inhibitor I9 domain; it reads SYIVMMKDDT…FVEPDTIISV (82 aa). One can recognise a Peptidase S8 domain in the interval 126–400; it reads SWGLARISNP…NVLINNGGAK (275 aa). Residues Asp-158 and His-190 each act as charge relay system in the active site. Residues 175–198 are disordered; it reads GSNQVNDGDDRDGSGHGTHTSGTM. Residues Asn-233 and Asn-251 are each glycosylated (N-linked (GlcNAc...) asparagine). Over residues 282–294 the composition is skewed to polar residues; that stretch reads NDNQDAQSSSPAS. Residues 282–312 form a disordered region; sequence NDNQDAQSSSPASEPSVCTVGSSAEDDSRSS. Ser-345 functions as the Charge relay system in the catalytic mechanism. The segment covering 378 to 394 has biased composition (polar residues); the sequence is TSSITDAGPGTPTNVLI. The disordered stretch occupies residues 378–496; that stretch reads TSSITDAGPG…PYPGGDNFDF (119 aa). 2 stretches are compositionally biased toward pro residues: residues 405–470 and 478–487; these read NPNP…PGEP and APAPQHPHTP.

Belongs to the peptidase S8 family.

It is found in the secreted. Functionally, secreted subtilisin-like serine protease with keratinolytic activity that contributes to pathogenicity. This chain is Subtilisin-like protease 1 (SUB1), found in Trichophyton verrucosum (strain HKI 0517).